Consider the following 76-residue polypeptide: Conotoxin Bu28 (76 aa).

Residues 1 to 24 (MTSVQSATCCCLLWLVLCVQLVTP) form the signal peptide. Positions 25–39 (DSPATAQLSRHLTAR) are excised as a propeptide. Disulfide bonds link Cys50–Cys63 and Cys54–Cys65. At Arg69 the chain carries Arginine amide. Positions 71–76 (VVSSSI) are excised as a propeptide.

Belongs to the conotoxin J superfamily. Expressed by the venom duct.

It localises to the secreted. Functionally, highly inhibits both nicotinic acetylcholine receptors (neuronal (alpha-3/beta-4) and muscular (alpha-1/beta-1/epsilon/delta) subtypes) and the voltage-gated potassium channel Kv1.6/KCNA6 subtype. This chain is Conotoxin Bu28, found in Conus bullatus (Bubble cone).